The sequence spans 268 residues: Undecaprenyl-diphosphatase (268 aa).

8 consecutive transmembrane segments (helical) span residues 3-23, 46-66, 84-104, 107-127, 144-164, 185-205, 213-233, and 246-266; these read FFNL…EFIP, FEVL…SAKL, LGVL…HGFI, VLFE…FILL, YPLP…IPGV, AEFS…YDLF, FNDG…GVFV, and FALF…ALII.

The protein belongs to the UppP family.

Its subcellular location is the cell inner membrane. It carries out the reaction di-trans,octa-cis-undecaprenyl diphosphate + H2O = di-trans,octa-cis-undecaprenyl phosphate + phosphate + H(+). In terms of biological role, catalyzes the dephosphorylation of undecaprenyl diphosphate (UPP). Confers resistance to bacitracin. The chain is Undecaprenyl-diphosphatase from Brucella abortus (strain S19).